Consider the following 459-residue polypeptide: Argininosuccinate lyase (459 aa).

Belongs to the lyase 1 family. Argininosuccinate lyase subfamily.

It localises to the cytoplasm. It catalyses the reaction 2-(N(omega)-L-arginino)succinate = fumarate + L-arginine. It participates in amino-acid biosynthesis; L-arginine biosynthesis; L-arginine from L-ornithine and carbamoyl phosphate: step 3/3. The polypeptide is Argininosuccinate lyase (Chromobacterium violaceum (strain ATCC 12472 / DSM 30191 / JCM 1249 / CCUG 213 / NBRC 12614 / NCIMB 9131 / NCTC 9757 / MK)).